The following is a 216-amino-acid chain: MSHKPDDDYDYLFKVVLIGDSGVGKSNLLSRFTRNEFSLESKSTIGVEFATRSIQVDGKTIKAQIWDTAGQERYRAITSAYYRGAVGALLVYDITKSVTFENVERWLKELRDHADSNIVIMLVGNKSDLKHLRDVQTEVAQAFCEREGLSFIETSALESTNVEKAFQQILTEIYHIVSKKVLDSEDNRPKIGEGRDVIVIDNAHDDGGKKKGGCCS.

19 to 26 (GDSGVGKS) provides a ligand contact to GTP. The Effector region signature appears at 41–49 (SKSTIGVEF). Residues 67–71 (DTAGQ) and 125–128 (NKSD) contribute to the GTP site. Residues Cys214 and Cys215 are each lipidated (S-geranylgeranyl cysteine).

The protein belongs to the small GTPase superfamily. Rab family.

The protein localises to the cell membrane. The protein is Ras-related protein YPTC6 (YPTC6) of Chlamydomonas reinhardtii (Chlamydomonas smithii).